The primary structure comprises 642 residues: MPVITLPDGSKREFAHAVSTLDVAADIGPGLAKACIAGRVNGELKDACDLIETDAELSIITAKDEEGVEILRHSCAHLLGHAIKQMWPETKMAIGPVIDNGFYYDIDLEHKLTQDDIDALEKRMLQLAKTNYDVVKRVVSWQEARDAFAARGEDYKIAILDENISKDATPALYHHEEYTDMCRGPHVPNMRFCQHFKLMSIAGAYWRGNSENKMLQRIYGTAWADKKALSTHLTRLEEAAKRDHRKIGKQLDLYHMQEEAPGMVFWHNDGWSIFLELERFIRRKLNQYTYQEVKGPLMMDRVLWERSGHWDKYSEAMFTTSSENREYAIKPMNCPGHVQIFNQGLKSYRDLPLRMAEFGCCHRNEPSGSLHGLMRVRGFTQDDAHIFCTDSQVQEEVSACIQMVYDTYATFGFENIVVKLSTRPEKRIGDDAMWDRAEEALKQALRDNNIEFTILPGEGAFYGPKIEFTLHDCLDRAWQCGTVQLDYALPSRLGATYVAEDNSRQTPVMIHRAILGSLERFLGILIEEYAGRFPTWLAPMQVVVMNITDKQADYVEEVVKFFKEQGIRASFDLRNEKIGFKIREHTLRRVPYLLVVGDQEMENKEVAVRTRDGIDLGKMRLEDFATKIHQQISLRSLKLLEE.

One can recognise a TGS domain in the interval 1–61 (MPVITLPDGS…ETDAELSIIT (61 aa)). The catalytic stretch occupies residues 243-534 (DHRKIGKQLD…LIEEYAGRFP (292 aa)). Zn(2+) contacts are provided by Cys-334, His-385, and His-511.

The protein belongs to the class-II aminoacyl-tRNA synthetase family. Homodimer. Requires Zn(2+) as cofactor.

The protein localises to the cytoplasm. The catalysed reaction is tRNA(Thr) + L-threonine + ATP = L-threonyl-tRNA(Thr) + AMP + diphosphate + H(+). Catalyzes the attachment of threonine to tRNA(Thr) in a two-step reaction: L-threonine is first activated by ATP to form Thr-AMP and then transferred to the acceptor end of tRNA(Thr). Also edits incorrectly charged L-seryl-tRNA(Thr). The protein is Threonine--tRNA ligase of Shewanella baltica (strain OS195).